Here is a 307-residue protein sequence, read N- to C-terminus: Actin maturation protease (307 aa).

The segment at 1 to 34 (MSLENDAAAPPPPPLPPPPPPQPPSLARSESSKK) is disordered. The span at 9–24 (APPPPPLPPPPPPQPP) shows a compositional bias: pro residues. The peptidase C39-like stretch occupies residues 80 to 200 (SLIQDGPQCG…WAVASGILLG (121 aa)). Cys88 is an active-site residue.

This sequence belongs to the ACTMAP family.

It is found in the cytoplasm. The catalysed reaction is N-terminal N(alpha)-acetyl-L-methionyl-L-aspartyl-[protein] + H2O = N-terminal L-aspartyl-[protein] + N-acetyl-L-methionine. It carries out the reaction N-terminal N(alpha)-acetyl-L-methionyl-L-glutamyl-[protein] + H2O = N-terminal L-glutamyl-[protein] + N-acetyl-L-methionine. It catalyses the reaction N-terminal N(alpha)-acetyl-L-cysteinyl-L-aspartyl-[protein] + H2O = N-terminal L-aspartyl-[protein] + N-acetyl-L-cysteine. The enzyme catalyses N-terminal N(alpha)-acetyl-L-cysteinyl-L-glutamyl-[protein] + H2O = N-terminal L-glutamyl-[protein] + N-acetyl-L-cysteine. In terms of biological role, actin maturation protease that specifically mediates the cleavage of immature acetylated N-terminal actin, thereby contributing to actin maturation. Cleaves N-terminal acetylated methionine of immature cytoplasmic actin after translation. Cleaves N-terminal acetylated cysteine of muscle actin after canonical removal of N-terminal methionine. This is Actin maturation protease from Danio rerio (Zebrafish).